The chain runs to 1909 residues: Plexin-B3 (1909 aa).

The N-terminal stretch at 1-44 is a signal peptide; that stretch reads MCHAAQETPLLHHFMAPVMARWPPFGLCLLLLLLSPPPLPLTGA. The Sema domain maps to 45–471; that stretch reads HRFSAPNTTL…TAHQVDRIPV (427 aa). Topologically, residues 45 to 1255 are extracellular; that stretch reads HRFSAPNTTL…PLSAFPVEAQ (1211 aa). N-linked (GlcNAc...) asparagine glycosylation occurs at asparagine 51. 2 disulfides stabilise this stretch: cysteine 98-cysteine 107 and cysteine 132-cysteine 140. A glycan (N-linked (GlcNAc...) asparagine) is linked at asparagine 231. 8 disulfides stabilise this stretch: cysteine 267–cysteine 370, cysteine 283–cysteine 315, cysteine 333–cysteine 357, cysteine 474–cysteine 491, cysteine 480–cysteine 525, cysteine 483–cysteine 500, cysteine 494–cysteine 506, and cysteine 562–cysteine 580. Residues 473 to 526 form the PSI 1 domain; sequence ACPQFPDCASCLQAQDPLCGWCVLQGRCTRKGQCGRAGQLNQWLWSYEEDSHCL. An N-linked (GlcNAc...) asparagine glycan is attached at asparagine 615. 2 consecutive PSI domains span residues 620 to 682 and 787 to 833; these read DCSA…GACP and DCAM…LLCP. 5 N-linked (GlcNAc...) asparagine glycosylation sites follow: asparagine 802, asparagine 900, asparagine 957, asparagine 1101, and asparagine 1218. 4 consecutive IPT/TIG domains span residues 835–925, 927–1012, 1015–1145, and 1159–1244; these read PSID…FTYQ, PVLL…FRYT, PQLV…FLYQ, and ARPY…YEAE. Residues 1256–1276 form a helical membrane-spanning segment; it reads AGVGMGAAVLIAAVLLLTLMY. At 1277-1909 the chain is on the cytoplasmic side; the sequence is RHKSKQALRD…ALVENKVTDL (633 aa).

Belongs to the plexin family. In terms of assembly, interacts (via cytoplasmic domain) with RAC1 and ARHGDIA. Binds MET and MST1R. Interacts (via cytoplasmic domain) with FSCN1. Interacts with RIT2/RIN. May form homodimers (via Sema domain). As to expression, expression detected in Purkinje and granular cells in cerebellum, and in brain neocortex but not in corpus callosum. Expressed in glioma cells and embryonic kidney cells (at protein level). Expressed in brain, liver, pancreas and placenta, with weak expression detected also in lung and kidney. Expressed in several glioma cell lines.

It is found in the cell membrane. In terms of biological role, receptor for SEMA5A that plays a role in axon guidance, invasive growth and cell migration. Stimulates neurite outgrowth and mediates Ca(2+)/Mg(2+)-dependent cell aggregation. In glioma cells, SEMA5A stimulation of PLXNB3 results in the disassembly of F-actin stress fibers, disruption of focal adhesions and cellular collapse as well as inhibition of cell migration and invasion through ARHGDIA-mediated inactivation of RAC1. In Homo sapiens (Human), this protein is Plexin-B3 (PLXNB3).